Consider the following 185-residue polypeptide: Ribosome-recycling factor (185 aa).

It belongs to the RRF family.

Its subcellular location is the cytoplasm. Responsible for the release of ribosomes from messenger RNA at the termination of protein biosynthesis. May increase the efficiency of translation by recycling ribosomes from one round of translation to another. The protein is Ribosome-recycling factor of Dichelobacter nodosus (strain VCS1703A).